We begin with the raw amino-acid sequence, 426 residues long: Serine--tRNA ligase (426 aa).

231 to 233 (TAE) lines the L-serine pocket. 262–264 (RSE) lines the ATP pocket. Glu285 contacts L-serine. 349–352 (EISS) contacts ATP. Ser384 contacts L-serine.

The protein belongs to the class-II aminoacyl-tRNA synthetase family. Type-1 seryl-tRNA synthetase subfamily. In terms of assembly, homodimer. The tRNA molecule binds across the dimer.

Its subcellular location is the cytoplasm. It catalyses the reaction tRNA(Ser) + L-serine + ATP = L-seryl-tRNA(Ser) + AMP + diphosphate + H(+). The enzyme catalyses tRNA(Sec) + L-serine + ATP = L-seryl-tRNA(Sec) + AMP + diphosphate + H(+). It participates in aminoacyl-tRNA biosynthesis; selenocysteinyl-tRNA(Sec) biosynthesis; L-seryl-tRNA(Sec) from L-serine and tRNA(Sec): step 1/1. Functionally, catalyzes the attachment of serine to tRNA(Ser). Is also able to aminoacylate tRNA(Sec) with serine, to form the misacylated tRNA L-seryl-tRNA(Sec), which will be further converted into selenocysteinyl-tRNA(Sec). This is Serine--tRNA ligase from Laribacter hongkongensis (strain HLHK9).